A 132-amino-acid chain; its full sequence is Large ribosomal subunit protein uL14 (132 aa).

This sequence belongs to the universal ribosomal protein uL14 family. Part of the 50S ribosomal subunit. Forms a cluster with proteins L3 and L24e, part of which may contact the 16S rRNA in 2 intersubunit bridges.

In terms of biological role, binds to 23S rRNA. Forms part of two intersubunit bridges in the 70S ribosome. The protein is Large ribosomal subunit protein uL14 of Methanocorpusculum labreanum (strain ATCC 43576 / DSM 4855 / Z).